Here is a 24-residue protein sequence, read N- to C-terminus: Chlorate reductase subunit beta (24 aa).

Heterotrimer of alpha, beta and gamma subunits. The cofactor is [3Fe-4S] cluster. [4Fe-4S] cluster is required as a cofactor.

It is found in the cytoplasm. Its function is as follows. Electron transfer subunit of the chlorate reductase. In Stutzerimonas chloritidismutans (Pseudomonas chloritidismutans), this protein is Chlorate reductase subunit beta.